Reading from the N-terminus, the 621-residue chain is Chaperone protein HtpG (621 aa).

Residues 1 to 341 (MSNQEYTFQT…SEDLPLNVSR (341 aa)) form an a; substrate-binding region. Positions 342 to 547 (EILQQNKILA…GDEQNAMMAN (206 aa)) are b. The segment at 548-621 (WMRQMGQSVP…RLNSVLLKAL (74 aa)) is c.

Belongs to the heat shock protein 90 family. In terms of assembly, homodimer.

It localises to the cytoplasm. Its function is as follows. Molecular chaperone. Has ATPase activity. This Helicobacter pylori (strain ATCC 700392 / 26695) (Campylobacter pylori) protein is Chaperone protein HtpG.